The sequence spans 157 residues: Regenerating islet-derived protein 4 (157 aa).

The first 22 residues, 1–22, serve as a signal peptide directing secretion; sequence MASKGVRLLLLLSWVAGPEVLS. A disulfide bond links Cys-29 and Cys-40. The C-type lectin domain maps to 36 to 154; the sequence is YRSHCYGYFR…CANRQHFLCK (119 aa). Residues Asn-49 and Asn-62 are each glycosylated (N-linked (GlcNAc...) asparagine). 2 cysteine pairs are disulfide-bonded: Cys-57–Cys-153 and Cys-128–Cys-145. Residues 97–102 and 134–136 contribute to the a carbohydrate site; these read DPQKKQ and KDK.

It is found in the secreted. Calcium-independent lectin displaying mannose-binding specificity and able to maintain carbohydrate recognition activity in an acidic environment. May be involved in inflammatory and metaplastic responses of the gastrointestinal epithelium. This chain is Regenerating islet-derived protein 4 (Reg4), found in Mus musculus (Mouse).